Consider the following 326-residue polypeptide: Aspartate carbamoyltransferase catalytic subunit (326 aa).

Arginine 55 and threonine 56 together coordinate carbamoyl phosphate. Lysine 83 provides a ligand contact to L-aspartate. Residues arginine 105, histidine 135, and glutamine 138 each coordinate carbamoyl phosphate. L-aspartate contacts are provided by arginine 176 and arginine 230. 2 residues coordinate carbamoyl phosphate: glycine 271 and proline 272.

It belongs to the aspartate/ornithine carbamoyltransferase superfamily. ATCase family. In terms of assembly, heterododecamer (2C3:3R2) of six catalytic PyrB chains organized as two trimers (C3), and six regulatory PyrI chains organized as three dimers (R2).

The catalysed reaction is carbamoyl phosphate + L-aspartate = N-carbamoyl-L-aspartate + phosphate + H(+). Its pathway is pyrimidine metabolism; UMP biosynthesis via de novo pathway; (S)-dihydroorotate from bicarbonate: step 2/3. Its function is as follows. Catalyzes the condensation of carbamoyl phosphate and aspartate to form carbamoyl aspartate and inorganic phosphate, the committed step in the de novo pyrimidine nucleotide biosynthesis pathway. The sequence is that of Aspartate carbamoyltransferase catalytic subunit from Streptomyces coelicolor (strain ATCC BAA-471 / A3(2) / M145).